The chain runs to 117 residues: UPF0321 protein PJ695.01c (117 aa).

The first 17 residues, 1-17 (MLLLLYICCLFLKFILA), serve as a signal peptide directing secretion. 4 N-linked (GlcNAc...) asparagine glycosylation sites follow: Asn39, Asn65, Asn71, and Asn104.

Belongs to the UPF0321 family.

In Schizosaccharomyces pombe (strain 972 / ATCC 24843) (Fission yeast), this protein is UPF0321 protein PJ695.01c.